Reading from the N-terminus, the 880-residue chain is Endoglucanase E-4 (880 aa).

The N-terminal stretch at 1 to 46 (MSVTEPPPRRRGRHSRARRFLTSLGATAALTAGMLGVPLATGTAHA) is a signal peptide. D104 functions as the Nucleophile in the catalytic mechanism. Catalysis depends on residues H422, H427, D461, and E470. One can recognise a CBM3 domain in the interval 504-652 (PDGPEIFVEA…GVPVWGTAPE (149 aa)). The interval 647-688 (WGTAPEEGEEPGGGEGPGGGEEPGEDVTPPSAPGSPAVRDVT) is disordered. The Fibronectin type-III domain maps to 678-770 (APGSPAVRDV…TVSFTTLAEN (93 aa)). The CBM2 domain maps to 771-880 (GGGPDASCTV…TLNGEPCALA (110 aa)).

This sequence belongs to the glycosyl hydrolase 9 (cellulase E) family.

The catalysed reaction is Endohydrolysis of (1-&gt;4)-beta-D-glucosidic linkages in cellulose, lichenin and cereal beta-D-glucans.. The protein operates within glycan metabolism; cellulose degradation. The polypeptide is Endoglucanase E-4 (celD) (Thermobifida fusca (Thermomonospora fusca)).